A 282-amino-acid polypeptide reads, in one-letter code: Ribosomal RNA small subunit methyltransferase A (282 aa).

The tract at residues 1 to 21 is disordered; sequence MPDFPKEHATPMSNRPPAHQA. S-adenosyl-L-methionine contacts are provided by N28, L30, G55, E76, D101, and N126.

Belongs to the class I-like SAM-binding methyltransferase superfamily. rRNA adenine N(6)-methyltransferase family. RsmA subfamily.

It is found in the cytoplasm. The enzyme catalyses adenosine(1518)/adenosine(1519) in 16S rRNA + 4 S-adenosyl-L-methionine = N(6)-dimethyladenosine(1518)/N(6)-dimethyladenosine(1519) in 16S rRNA + 4 S-adenosyl-L-homocysteine + 4 H(+). In terms of biological role, specifically dimethylates two adjacent adenosines (A1518 and A1519) in the loop of a conserved hairpin near the 3'-end of 16S rRNA in the 30S particle. May play a critical role in biogenesis of 30S subunits. In Chromohalobacter salexigens (strain ATCC BAA-138 / DSM 3043 / CIP 106854 / NCIMB 13768 / 1H11), this protein is Ribosomal RNA small subunit methyltransferase A.